We begin with the raw amino-acid sequence, 910 residues long: Eukaryotic translation initiation factor 3 subunit C (910 aa).

The disordered stretch occupies residues 1–21 (MSRFFANGSDSESESSEDEIQ). Residues 11 to 20 (SESESSEDEI) show a composition bias toward acidic residues. S34, S165, S176, and S185 each carry phosphoserine. The tract at residues 157 to 279 (FREAPDQESE…IRKRAEDDED (123 aa)) is disordered. Over residues 162-186 (DQESEAEDEVVALESDGGDAGDDSD) the composition is skewed to acidic residues. Residues 188-207 (GVKPTEAAPKAVKTAPAKAA) are compositionally biased toward low complexity. Acidic residues predominate over residues 209–235 (ADDDDSDDSIDWDSDSESETESSDDEN). Positions 240-268 (MRERFLKRTTEKEEKDDDKRKDKRKEQKI) are enriched in basic and acidic residues. The PCI domain occupies 639–815 (FHMHINLELL…ETVVMHRSEP (177 aa)). The disordered stretch occupies residues 847–910 (FFQRGNMGNR…QQQVQTIDEE (64 aa)). Over residues 862-874 (NRNQNNQGGNWLG) the composition is skewed to low complexity. The span at 882–891 (RNRNQRGHHK) shows a compositional bias: basic residues. Over residues 895 to 910 (DRQQQQQQQVQTIDEE) the composition is skewed to low complexity.

This sequence belongs to the eIF-3 subunit C family. Component of the eukaryotic translation initiation factor 3 (eIF-3) complex. The eIF-3 complex interacts with pix.

It localises to the cytoplasm. Component of the eukaryotic translation initiation factor 3 (eIF-3) complex, which is involved in protein synthesis of a specialized repertoire of mRNAs and, together with other initiation factors, stimulates binding of mRNA and methionyl-tRNAi to the 40S ribosome. The eIF-3 complex specifically targets and initiates translation of a subset of mRNAs involved in cell proliferation. The polypeptide is Eukaryotic translation initiation factor 3 subunit C (Drosophila erecta (Fruit fly)).